A 216-amino-acid chain; its full sequence is uncharacterized protein (216 aa).

The chain crosses the membrane as a helical span at residues 5 to 22; it reads LGLVFGSVILIYLISLFL.

It localises to the membrane. This is an uncharacterized protein from Aquifex aeolicus (strain VF5).